A 618-amino-acid chain; its full sequence is Beta-glucosidase C (618 aa).

An N-terminal signal peptide occupies residues 1–19 (MRVDSTVLALVALATDCLG). Residues asparagine 40, asparagine 82, asparagine 104, asparagine 211, and asparagine 263 are each glycosylated (N-linked (GlcNAc...) asparagine). Residue aspartate 330 is part of the active site. N-linked (GlcNAc...) asparagine glycans are attached at residues asparagine 417, asparagine 448, asparagine 477, asparagine 482, asparagine 502, and asparagine 517.

The protein belongs to the glycosyl hydrolase 3 family.

It localises to the secreted. It catalyses the reaction Hydrolysis of terminal, non-reducing beta-D-glucosyl residues with release of beta-D-glucose.. Its pathway is glycan metabolism; cellulose degradation. Its function is as follows. Beta-glucosidases are one of a number of cellulolytic enzymes involved in the degradation of cellulosic biomass. Catalyzes the last step releasing glucose from the inhibitory cellobiose. In Emericella nidulans (strain FGSC A4 / ATCC 38163 / CBS 112.46 / NRRL 194 / M139) (Aspergillus nidulans), this protein is Beta-glucosidase C (bglC).